Consider the following 847-residue polypeptide: Leucine--tRNA ligase (847 aa).

Residues 39–49 carry the 'HIGH' region motif; sequence PYPSGALHMGH. Positions 613–617 match the 'KMSKS' region motif; it reads KMSKS. Lys-616 provides a ligand contact to ATP.

It belongs to the class-I aminoacyl-tRNA synthetase family.

The protein resides in the cytoplasm. It catalyses the reaction tRNA(Leu) + L-leucine + ATP = L-leucyl-tRNA(Leu) + AMP + diphosphate. This is Leucine--tRNA ligase from Gloeobacter violaceus (strain ATCC 29082 / PCC 7421).